Consider the following 493-residue polypeptide: Cobyric acid synthase (493 aa).

The GATase cobBQ-type domain occupies D252–W441. Residue C333 is the Nucleophile of the active site. H433 is a catalytic residue.

It belongs to the CobB/CobQ family. CobQ subfamily.

The protein operates within cofactor biosynthesis; adenosylcobalamin biosynthesis. In terms of biological role, catalyzes amidations at positions B, D, E, and G on adenosylcobyrinic A,C-diamide. NH(2) groups are provided by glutamine, and one molecule of ATP is hydrogenolyzed for each amidation. This chain is Cobyric acid synthase, found in Thermosynechococcus vestitus (strain NIES-2133 / IAM M-273 / BP-1).